Consider the following 79-residue polypeptide: Conotoxin PnMSGL-03 (79 aa).

Residues 1-20 form the signal peptide; it reads MSRLGIMVLTLLLLVFIVTS. Positions 21 to 44 are excised as a propeptide; the sequence is HQDAGEKQATQRDAINFRWRRSLI. 3 cysteine pairs are disulfide-bonded: C52–C64, C56–C73, and C63–C77. L78 bears the Leucine amide mark.

The protein belongs to the conotoxin O3 superfamily. Expressed by the venom duct.

The protein resides in the secreted. The polypeptide is Conotoxin PnMSGL-03 (Conus pennaceus (Feathered cone)).